The sequence spans 468 residues: 3-isopropylmalate dehydratase large subunit (468 aa).

[4Fe-4S] cluster is bound by residues cysteine 347, cysteine 407, and cysteine 410.

The protein belongs to the aconitase/IPM isomerase family. LeuC type 1 subfamily. As to quaternary structure, heterodimer of LeuC and LeuD. It depends on [4Fe-4S] cluster as a cofactor.

The catalysed reaction is (2R,3S)-3-isopropylmalate = (2S)-2-isopropylmalate. The protein operates within amino-acid biosynthesis; L-leucine biosynthesis; L-leucine from 3-methyl-2-oxobutanoate: step 2/4. Its function is as follows. Catalyzes the isomerization between 2-isopropylmalate and 3-isopropylmalate, via the formation of 2-isopropylmaleate. This Campylobacter jejuni subsp. jejuni serotype O:6 (strain 81116 / NCTC 11828) protein is 3-isopropylmalate dehydratase large subunit.